The sequence spans 535 residues: Portal protein (535 aa).

This sequence belongs to the podoviridae portal protein family. In terms of assembly, homododecamer. Interacts with major capsid protein. Interacts with the tail tube proteins gp11 and gp12. Interacts with the terminase large subunit. Interacts with the internal virion protein gp14.

The protein resides in the virion. In terms of biological role, forms the portal vertex of the capsid. This portal plays critical roles in head assembly, genome packaging, neck/tail attachment, and genome ejection. The portal protein multimerizes as a single ring-shaped homododecamer arranged around a central channel. This chain is Portal protein (8), found in Enterobacteria phage T3 (Bacteriophage T3).